Consider the following 148-residue polypeptide: Sec-independent protein translocase protein TatB (148 aa).

A helical transmembrane segment spans residues 1-21 (MFDIGFWELVVIGIVALVVLG).

The protein belongs to the TatB family. The Tat system comprises two distinct complexes: a TatABC complex, containing multiple copies of TatA, TatB and TatC subunits, and a separate TatA complex, containing only TatA subunits. Substrates initially bind to the TatABC complex, which probably triggers association of the separate TatA complex to form the active translocon.

It localises to the cell inner membrane. Functionally, part of the twin-arginine translocation (Tat) system that transports large folded proteins containing a characteristic twin-arginine motif in their signal peptide across membranes. Together with TatC, TatB is part of a receptor directly interacting with Tat signal peptides. TatB may form an oligomeric binding site that transiently accommodates folded Tat precursor proteins before their translocation. The sequence is that of Sec-independent protein translocase protein TatB from Aeromonas salmonicida (strain A449).